Reading from the N-terminus, the 234-residue chain is Triosephosphate isomerase (234 aa).

8–10 (NFK) is a substrate binding site. The active-site Electrophile is the H90. E159 acts as the Proton acceptor in catalysis. Substrate-binding positions include G165, S197, and 218–219 (GS).

In terms of assembly, homodimer.

Its subcellular location is the cytoplasm. The enzyme catalyses D-glyceraldehyde 3-phosphate = dihydroxyacetone phosphate. The protein operates within carbohydrate biosynthesis; gluconeogenesis. It functions in the pathway carbohydrate degradation; glycolysis; D-glyceraldehyde 3-phosphate from glycerone phosphate: step 1/1. In terms of biological role, involved in the gluconeogenesis. Catalyzes stereospecifically the conversion of dihydroxyacetone phosphate (DHAP) to D-glyceraldehyde-3-phosphate (G3P). This chain is Triosephosphate isomerase, found in Helicobacter pylori (strain ATCC 700392 / 26695) (Campylobacter pylori).